The sequence spans 404 residues: CCA-adding enzyme (404 aa).

ATP is bound by residues Gly-27 and Arg-30. Residues Gly-27 and Arg-30 each coordinate CTP. Mg(2+)-binding residues include Asp-40 and Asp-42. ATP contacts are provided by Arg-111, Asp-154, Arg-157, Arg-160, and Arg-163. Residues Arg-111, Asp-154, Arg-157, Arg-160, and Arg-163 each contribute to the CTP site.

The protein belongs to the tRNA nucleotidyltransferase/poly(A) polymerase family. Bacterial CCA-adding enzyme type 3 subfamily. Homodimer. Mg(2+) serves as cofactor.

It carries out the reaction a tRNA precursor + 2 CTP + ATP = a tRNA with a 3' CCA end + 3 diphosphate. The enzyme catalyses a tRNA with a 3' CCA end + 2 CTP + ATP = a tRNA with a 3' CCACCA end + 3 diphosphate. Its function is as follows. Catalyzes the addition and repair of the essential 3'-terminal CCA sequence in tRNAs without using a nucleic acid template. Adds these three nucleotides in the order of C, C, and A to the tRNA nucleotide-73, using CTP and ATP as substrates and producing inorganic pyrophosphate. tRNA 3'-terminal CCA addition is required both for tRNA processing and repair. Also involved in tRNA surveillance by mediating tandem CCA addition to generate a CCACCA at the 3' terminus of unstable tRNAs. While stable tRNAs receive only 3'-terminal CCA, unstable tRNAs are marked with CCACCA and rapidly degraded. The protein is CCA-adding enzyme of Geobacillus sp. (strain WCH70).